Reading from the N-terminus, the 196-residue chain is Imidazoleglycerol-phosphate dehydratase (196 aa).

Belongs to the imidazoleglycerol-phosphate dehydratase family.

Its subcellular location is the cytoplasm. The enzyme catalyses D-erythro-1-(imidazol-4-yl)glycerol 3-phosphate = 3-(imidazol-4-yl)-2-oxopropyl phosphate + H2O. Its pathway is amino-acid biosynthesis; L-histidine biosynthesis; L-histidine from 5-phospho-alpha-D-ribose 1-diphosphate: step 6/9. The protein is Imidazoleglycerol-phosphate dehydratase of Chlorobium chlorochromatii (strain CaD3).